The following is a 435-amino-acid chain: Tumor necrosis factor receptor superfamily member 3 (435 aa).

A signal peptide spans 1–30 (MLLPWATSAPGLAWGPLVLGLFGLLAASQP). Residues 31–227 (QAVPPYASEN…PPEMSGTMLM (197 aa)) are Extracellular-facing. Asn-40 carries an N-linked (GlcNAc...) asparagine glycan. 4 TNFR-Cys repeats span residues 42-81 (TCRD…TVCA), 82-124 (TCAE…KTQC), 125-168 (RCQP…NHCV), and 169-211 (PCKA…TTCK). Cystine bridges form between Cys-43/Cys-58, Cys-59/Cys-72, Cys-62/Cys-80, Cys-83/Cys-98, Cys-101/Cys-116, Cys-104/Cys-124, Cys-126/Cys-132, Cys-139/Cys-148, Cys-142/Cys-167, and Cys-170/Cys-185. Asn-177 carries an N-linked (GlcNAc...) asparagine glycan. Residues 228–248 (LAVLLPLAFFLLLATVFSCIW) traverse the membrane as a helical segment. Residues 249–435 (KSHPSLCRKL…GPRNQFITHD (187 aa)) lie on the Cytoplasmic side of the membrane. Ser-323 is modified (phosphoserine). Positions 373–399 (PGPGDLPATPEPPYPIPEEGDPGPPGL) are enriched in pro residues. Positions 373–435 (PGPGDLPATP…GPRNQFITHD (63 aa)) are disordered. The segment covering 403 to 417 (HQEDGKAWHLAETEH) has biased composition (basic and acidic residues). Residues 421 to 435 (TPSNRGPRNQFITHD) are compositionally biased toward polar residues.

Self-associates; dimerization and trimerization are promoted by lymphotoxin (LTA(1)-LTB(2)). Associates with TRAF3. Associates with TRAF4. Associates with TRAF5. Interacts with Aedes aegypti lymphotoxin beta receptor inhibitor; the interaction reduces dimerization and trimerization of LTBR induced by lymphotoxin (LTA(1)-LTB(2)). In terms of assembly, (Microbial infection) Interacts with HCV core protein.

Its subcellular location is the membrane. In terms of biological role, receptor for the heterotrimeric lymphotoxin containing LTA and LTB, and for TNFS14/LIGHT. Activates NF-kappa-B signaling pathway upon stimulation with lymphotoxin (LTA(1)-LTB(2)). Promotes apoptosis via TRAF3 and TRAF5. May play a role in the development of lymphoid organs. The sequence is that of Tumor necrosis factor receptor superfamily member 3 (LTBR) from Homo sapiens (Human).